The sequence spans 601 residues: Zinc finger protein 37 (601 aa).

The KRAB domain maps to M1–S70. Phosphothreonine is present on T3. Position 9 is a phosphoserine (S9). The span at E30–P43 shows a compositional bias: polar residues. The interval E30–G254 is disordered. The span at S60–S70 shows a compositional bias: low complexity. Residues T77–A88 show a composition bias toward polar residues. 3 stretches are compositionally biased toward basic and acidic residues: residues K115–K136, K164–K174, and V183–K238. A C2H2-type 1 zinc finger spans residues Y257–H279. The C2H2-type 2; atypical zinc finger occupies Y285 to H303. 10 consecutive C2H2-type zinc fingers follow at residues Y314 to H337, Y343 to H365, Y371 to H393, Y399 to H421, F427 to H449, Y455 to H477, F483 to H505, Y511 to H533, F539 to H561, and Y570 to H592.

Belongs to the krueppel C2H2-type zinc-finger protein family. Expressed in testes, brain, kidney, spleen, thymus, lung, and at low levels in liver.

Its subcellular location is the nucleus. May be involved in transcriptional regulation. This chain is Zinc finger protein 37 (Zfp37), found in Rattus norvegicus (Rat).